The following is a 265-amino-acid chain: Hydroxyethylthiazole kinase (265 aa).

Methionine 44 is a binding site for substrate. ATP-binding residues include lysine 120 and serine 166. Glycine 193 contributes to the substrate binding site.

This sequence belongs to the Thz kinase family. It depends on Mg(2+) as a cofactor.

The enzyme catalyses 5-(2-hydroxyethyl)-4-methylthiazole + ATP = 4-methyl-5-(2-phosphooxyethyl)-thiazole + ADP + H(+). It participates in cofactor biosynthesis; thiamine diphosphate biosynthesis; 4-methyl-5-(2-phosphoethyl)-thiazole from 5-(2-hydroxyethyl)-4-methylthiazole: step 1/1. In terms of biological role, catalyzes the phosphorylation of the hydroxyl group of 4-methyl-5-beta-hydroxyethylthiazole (THZ). This chain is Hydroxyethylthiazole kinase, found in Methanosphaerula palustris (strain ATCC BAA-1556 / DSM 19958 / E1-9c).